The chain runs to 426 residues: Phosphomethylpyrimidine synthase (426 aa).

Substrate contacts are provided by residues asparagine 65, methionine 94, tyrosine 123, histidine 162, 184–186 (SRG), 225–228 (DGMR), and glutamate 264. Residue histidine 268 coordinates Zn(2+). Tyrosine 291 lines the substrate pocket. Histidine 332 lines the Zn(2+) pocket. Residues cysteine 408, cysteine 411, and cysteine 415 each coordinate [4Fe-4S] cluster.

This sequence belongs to the ThiC family. Requires [4Fe-4S] cluster as cofactor.

The catalysed reaction is 5-amino-1-(5-phospho-beta-D-ribosyl)imidazole + S-adenosyl-L-methionine = 4-amino-2-methyl-5-(phosphooxymethyl)pyrimidine + CO + 5'-deoxyadenosine + formate + L-methionine + 3 H(+). It functions in the pathway cofactor biosynthesis; thiamine diphosphate biosynthesis. Its function is as follows. Catalyzes the synthesis of the hydroxymethylpyrimidine phosphate (HMP-P) moiety of thiamine from aminoimidazole ribotide (AIR) in a radical S-adenosyl-L-methionine (SAM)-dependent reaction. In Methanococcus maripaludis (strain C7 / ATCC BAA-1331), this protein is Phosphomethylpyrimidine synthase.